Reading from the N-terminus, the 193-residue chain is Interferon type A1/A2 (193 aa).

A signal peptide spans 1-31 (MAVPASPQHPRGYGILLLTLLLKALATTASA). 3 cysteine pairs are disulfide-bonded: Cys-32/Cys-129, Cys-61/Cys-155, and Cys-68/Cys-168. N-linked (GlcNAc...) asparagine glycans are attached at residues Asn-65, Asn-71, Asn-108, and Asn-186.

The protein belongs to the alpha/beta interferon family.

It is found in the secreted. Has antiviral activities. In Gallus gallus (Chicken), this protein is Interferon type A1/A2 (IFNA1).